A 96-amino-acid chain; its full sequence is Aspartyl/glutamyl-tRNA(Asn/Gln) amidotransferase subunit C (96 aa).

This sequence belongs to the GatC family. Heterotrimer of A, B and C subunits.

It catalyses the reaction L-glutamyl-tRNA(Gln) + L-glutamine + ATP + H2O = L-glutaminyl-tRNA(Gln) + L-glutamate + ADP + phosphate + H(+). The catalysed reaction is L-aspartyl-tRNA(Asn) + L-glutamine + ATP + H2O = L-asparaginyl-tRNA(Asn) + L-glutamate + ADP + phosphate + 2 H(+). Functionally, allows the formation of correctly charged Asn-tRNA(Asn) or Gln-tRNA(Gln) through the transamidation of misacylated Asp-tRNA(Asn) or Glu-tRNA(Gln) in organisms which lack either or both of asparaginyl-tRNA or glutaminyl-tRNA synthetases. The reaction takes place in the presence of glutamine and ATP through an activated phospho-Asp-tRNA(Asn) or phospho-Glu-tRNA(Gln). This chain is Aspartyl/glutamyl-tRNA(Asn/Gln) amidotransferase subunit C, found in Bacillus cytotoxicus (strain DSM 22905 / CIP 110041 / 391-98 / NVH 391-98).